The following is a 397-amino-acid chain: Purine ribonucleoside efflux pump NepI (397 aa).

Topologically, residues 1 to 21 (MNENIAEKFRADGVARPNWSA) are cytoplasmic. The chain crosses the membrane as a helical span at residues 22-42 (VFAVAFCVACLITVEFLPVSL). The Periplasmic portion of the chain corresponds to 43–54 (LTPMAQDLGISE). A helical membrane pass occupies residues 55–75 (GIAGQSVTVTAFVAMFSSLFI). At 76 to 85 (TQIIQATDRR) the chain is on the cytoplasmic side. Residues 86–106 (YIVILFAVLLTASCLMVSFAN) traverse the membrane as a helical segment. Serine 107 is a topological domain (periplasmic). A helical transmembrane segment spans residues 108 to 128 (FTLLLLGRACLGLALGGFWAM). The Cytoplasmic portion of the chain corresponds to 129–147 (SASLTMRLVPARTVPKALS). A helical membrane pass occupies residues 148 to 168 (VIFGAVSIALVIAAPLGSFLG). Residues 169–175 (GIIGWRN) are Periplasmic-facing. The helical transmembrane segment at 176–196 (VFNAAAVMGVLCVIWVVKSLP) threads the bilayer. The Cytoplasmic portion of the chain corresponds to 197 to 215 (SLPGEPSHQKQNMFSLLQR). A helical membrane pass occupies residues 216-236 (PGVMAGMIAIFMSFAGQFAFF). Topologically, residues 237 to 255 (TYIRPVYMNLAGFDVDGLT) are periplasmic. A helical membrane pass occupies residues 256–276 (LVLLSFGIASFVGTSFSSYVL). At 277 to 281 (KRSVK) the chain is on the cytoplasmic side. The chain crosses the membrane as a helical span at residues 282 to 302 (LALAGAPLLLALSALTLIVWG). At 303-305 (SDK) the chain is on the periplasmic side. A helical membrane pass occupies residues 306 to 326 (TVAAVIAIIWGLAFALVPVGW). The Cytoplasmic segment spans residues 327–343 (STWITRSLADQAEKAGS). A helical membrane pass occupies residues 344–364 (IQVAVIQLANTCGAAVGGYAL). At 365–366 (DN) the chain is on the periplasmic side. A helical transmembrane segment spans residues 367–387 (FGLLSPLALSGCLMLLTALVV). Over 388-397 (AAKVRITPMS) the chain is Cytoplasmic.

Belongs to the major facilitator superfamily. DHA1 family. NepI (TC 2.A.1.2.26) subfamily.

It localises to the cell inner membrane. The enzyme catalyses inosine(in) + H(+)(out) = inosine(out) + H(+)(in). It carries out the reaction guanosine(in) + H(+)(out) = guanosine(out) + H(+)(in). Involved in the efflux of purine ribonucleosides, such as inosine and guanosine. This chain is Purine ribonucleoside efflux pump NepI, found in Salmonella enteritidis PT4 (strain P125109).